Here is a 466-residue protein sequence, read N- to C-terminus: Trigger factor (466 aa).

The PPIase FKBP-type domain occupies 166–245 (GDFAQIDLVA…LNAVKERELP (80 aa)). Disordered stretches follow at residues 313–332 (LEQE…TESS) and 424–466 (LPDD…AADK). Positions 426–444 (DDGEAVDEDATPEDTDAPA) are enriched in acidic residues. Over residues 453 to 466 (PKKKAAAKKKAADK) the composition is skewed to basic residues.

Belongs to the FKBP-type PPIase family. Tig subfamily.

It is found in the cytoplasm. It catalyses the reaction [protein]-peptidylproline (omega=180) = [protein]-peptidylproline (omega=0). Functionally, involved in protein export. Acts as a chaperone by maintaining the newly synthesized protein in an open conformation. Functions as a peptidyl-prolyl cis-trans isomerase. This chain is Trigger factor, found in Leifsonia xyli subsp. xyli (strain CTCB07).